We begin with the raw amino-acid sequence, 784 residues long: MPRALWPAWVWAIIILSMEGASDKASSLSCDPTGVCDGRSRSLNSIPSGLTAGVKSLDLSNNEITYVGNRDLQRCVNLKTLRLGANEIHTVEEDSFFHLRNLEYLDLSYNRLSNLSSSWFRSLYVLKFLNLLGNLYKTLGETSLFSHLPDLRTLKVGNSNSFTEIHEKDFTGLTFLEELEISAQNLQIYVPKSLKSIQNISHLILHLKQPVLLVDILVDIVSSLDCLELRDTNLHTFHFSEASISEMSTSVKKLIFRNVQFTDESFVEVVKLFNYVSGIVEVEFDDCTHDGIGDFRALSLDRIRHLGNVETLTIRKLHIPQFFLFQDLSSIYPLTGKVKRVTIENSKVFLVPCLLSQHLKSLEYLDLSENLMSEETLKNSACKDAWPFLQTLVLRQNRLKSLEKTGELLLTLKNLNNLDISKNNFLSMPETCQWPGKMKQLNLSSTKIRSLTQCLPQTLEILDVSNNNLDSFSLILPQLKELYISRNKLKTLPDASFLPVLSVMGISKNIINTFSKEQLDSFQQLKTLEAGGNNFICSCDFLSFTQGQQALGRVLVDWPDDYRCDSPSHVRGQRLQDARLSLSECHRAAVVSAACCALFLFLLLTGVLCHRFHGLWYMKIMWAWLQAKRKPRKAPRRDICYDAFVSYSERDSYWVENLMVQELEHFNPPFKLCLHKRDFIPGKWIIDNIIDSIEKSHKTIFVLSENFVKSEWCKYELDFSHFRLFDENNDAVILILLEPIDKKAIPQRFCKLRKIMNTKTYLEWPLDETQQEGFWLNLRAAIRS.

The N-terminal stretch at 1–20 (MPRALWPAWVWAIIILSMEG) is a signal peptide. The Extracellular segment spans residues 21–587 (ASDKASSLSC…ARLSLSECHR (567 aa)). A disulfide bridge links Cys-30 with Cys-36. LRR repeat units follow at residues 54-77 (VKSL…RCVN), 78-101 (LKTL…HLRN), 102-125 (LEYL…SLYV), 126-150 (LKFL…HLPD), 151-175 (LRTL…GLTF), 176-199 (LEEL…SIQN), 200-223 (ISHL…IVSS), 224-250 (LDCL…MSTS), 251-278 (VKKL…YVSG), 279-308 (IVEV…HLGN), 309-337 (VETL…LTGK), 338-361 (VKRV…HLKS), 362-388 (LEYL…AWPF), 389-414 (LQTL…TLKN), 415-437 (LNNL…WPGK), 438-457 (MKQL…CLPQ), 458-478 (TLEI…ILPQ), 479-500 (LKEL…FLPV), and 501-524 (LSVM…SFQQ). N-linked (GlcNAc...) asparagine glycosylation is present at Asn-114. A glycan (N-linked (GlcNAc...) asparagine) is linked at Asn-199. Cys-353 and Cys-382 are disulfide-bonded. Cys-432 and Cys-454 are disulfide-bonded. Asn-442 carries N-linked (GlcNAc...) asparagine glycosylation. The LRRCT domain maps to 525–579 (LKTLEAGGNNFICSCDFLSFTQGQQALGRVLVDWPDDYRCDSPSHVRGQRLQDAR). Residues 588-608 (AAVVSAACCALFLFLLLTGVL) traverse the membrane as a helical segment. Topologically, residues 609 to 784 (CHRFHGLWYM…WLNLRAAIRS (176 aa)) are cytoplasmic. A TIR domain is found at 639-782 (ICYDAFVSYS…GFWLNLRAAI (144 aa)). Lys-754 is covalently cross-linked (Glycyl lysine isopeptide (Lys-Gly) (interchain with G-Cter in ubiquitin)). The ATG16L1-binding motif signature appears at 761–778 (YLEWPLDETQQEGFWLNL).

The protein belongs to the Toll-like receptor family. In terms of assembly, interacts with LY96, TLR1 and TLR6 (via extracellular domain). TLR2 seems to exist in heterodimers with either TLR1 or TLR6 before stimulation by the ligand. The heterodimers form bigger oligomers in response to their corresponding ligands as well as further heterotypic associations with other receptors such as CD14 and/or CD36. Binds MYD88 (via TIR domain). Interacts with TICAM1. Interacts with CNPY3. Interacts with ATG16L1. Interacts with PPP1R11. Interacts with TICAM2. Interacts with TIRAP. Ubiquitinated at Lys-754 by PPP1R11, leading to its degradation. Deubiquitinated by USP2. In terms of processing, glycosylation of Asn-442 is critical for secretion of the N-terminal ectodomain of TLR2.

The protein resides in the membrane. It localises to the cytoplasmic vesicle. Its subcellular location is the phagosome membrane. The protein localises to the membrane raft. Cooperates with LY96 to mediate the innate immune response to bacterial lipoproteins and other microbial cell wall components. Cooperates with TLR1 or TLR6 to mediate the innate immune response to bacterial lipoproteins or lipopeptides. Acts via MYD88 and TRAF6, leading to NF-kappa-B activation, cytokine secretion and the inflammatory response. May also promote apoptosis in response to lipoproteins. Forms activation clusters composed of several receptors depending on the ligand, these clusters trigger signaling from the cell surface and subsequently are targeted to the Golgi in a lipid-raft dependent pathway. Forms the cluster TLR2:TLR6:CD14:CD36 in response to diacylated lipopeptides and TLR2:TLR1:CD14 in response to triacylated lipopeptides. This chain is Toll-like receptor 2 (TLR2), found in Boselaphus tragocamelus (Nilgai).